A 401-amino-acid polypeptide reads, in one-letter code: Large ribosomal subunit protein uL4 (401 aa).

Belongs to the universal ribosomal protein uL4 family.

The chain is Large ribosomal subunit protein uL4 (RpL4) from Drosophila melanogaster (Fruit fly).